Consider the following 449-residue polypeptide: 23S rRNA (uracil(1939)-C(5))-methyltransferase RlmD (449 aa).

In terms of domain architecture, TRAM spans M1–E66. Positions 79, 85, 88, and 169 each coordinate [4Fe-4S] cluster. S-adenosyl-L-methionine contacts are provided by Q280, F309, N314, E330, N357, and D379. The active-site Nucleophile is C405.

Belongs to the class I-like SAM-binding methyltransferase superfamily. RNA M5U methyltransferase family. RlmD subfamily.

It catalyses the reaction uridine(1939) in 23S rRNA + S-adenosyl-L-methionine = 5-methyluridine(1939) in 23S rRNA + S-adenosyl-L-homocysteine + H(+). Its function is as follows. Catalyzes the formation of 5-methyl-uridine at position 1939 (m5U1939) in 23S rRNA. The chain is 23S rRNA (uracil(1939)-C(5))-methyltransferase RlmD from Francisella tularensis subsp. holarctica (strain LVS).